The sequence spans 133 residues: Small ribosomal subunit protein uS8 (133 aa).

It belongs to the universal ribosomal protein uS8 family. In terms of assembly, part of the 30S ribosomal subunit. Contacts proteins S5 and S12.

One of the primary rRNA binding proteins, it binds directly to 16S rRNA central domain where it helps coordinate assembly of the platform of the 30S subunit. In Koribacter versatilis (strain Ellin345), this protein is Small ribosomal subunit protein uS8.